We begin with the raw amino-acid sequence, 254 residues long: NAD-dependent glycerol dehydrogenase (254 aa).

18-47 provides a ligand contact to NAD(+); sequence VVTGAASGIGKAMAELFSEKGAYVVLLDIK. The Proton acceptor role is filled by Y160. K164 lines the NAD(+) pocket.

It belongs to the short-chain dehydrogenases/reductases (SDR) family. Requires Mg(2+) as cofactor. The cofactor is Mn(2+).

It localises to the cytoplasm. It carries out the reaction glycerol + NAD(+) = dihydroxyacetone + NADH + H(+). Inhibited by Zn(2+). Involved in the glycerol metabolism. Catalyzes the NAD-dependent oxidation of glycerol to dihydroxyacetone (glycerone). GolD specifically uses NAD. This is NAD-dependent glycerol dehydrogenase from Listeria innocua serovar 6a (strain ATCC BAA-680 / CLIP 11262).